The chain runs to 239 residues: Protein LIFEGUARD 2 (239 aa).

Helical transmembrane passes span 41–61, 66–86, 96–116, 121–141, 156–176, 179–199, and 213–233; these read LLVTIAVAATVVKVHSISVFF, AGFALYILLILTPLIVMCPLY, YLLLGIFTVALAFAVGLTCAF, VILESVILTAVVVISLTLYTF, FLFGAVIVLMVFSFIQILFPL, ISVMIYGCLASIIFCGYIVYD, and IWAAVSLYLDVINLFLSLLTL.

This sequence belongs to the BI1 family. In terms of tissue distribution, expressed in seedlings, roots, leaves, inflorescences and flowers.

The protein localises to the membrane. Functionally, regulates the brassinosteroid (BR) signaling pathway that mediates cell elongation and organ morphogenesis. Its function is as follows. (Microbial infection) Facilitates the development of the powdery mildew fungus E.cruciferarum. (Microbial infection) May prevent cell death upon A.alternata f.sp. lycopersici (AAL) toxin treatment. This is Protein LIFEGUARD 2 from Arabidopsis thaliana (Mouse-ear cress).